The chain runs to 207 residues: Large ribosomal subunit protein uL4 (207 aa).

The disordered stretch occupies residues 56–77 (FVSGGGKKPWRQKGTGRARHGS). A compositionally biased stretch (basic residues) spans 63 to 77 (KPWRQKGTGRARHGS).

The protein belongs to the universal ribosomal protein uL4 family. Part of the 50S ribosomal subunit.

In terms of biological role, one of the primary rRNA binding proteins, this protein initially binds near the 5'-end of the 23S rRNA. It is important during the early stages of 50S assembly. It makes multiple contacts with different domains of the 23S rRNA in the assembled 50S subunit and ribosome. Its function is as follows. Forms part of the polypeptide exit tunnel. The chain is Large ribosomal subunit protein uL4 from Phytoplasma australiense.